The primary structure comprises 591 residues: Lysyl oxidase homolog 1 (591 aa).

Residues 1-22 (MALALTGWQLVWGACVCVLVHG) form the signal peptide. Residues 23–91 (QQAPPGQGSD…PRRRGGLRRR (69 aa)) constitute a propeptide that is removed on maturation. 2 disordered regions span residues 77–107 (APQAPPRRRGGLRRRQAPSLPLPGRVGSDTV) and 233–373 (EYGG…RLSV). The span at 82-92 (PRRRGGLRRRQ) shows a compositional bias: basic residues. Residues 298–313 (NGGGGGGTYGGGGGDP) are compositionally biased toward gly residues. Residues 319–386 (PPYGNMPPEA…YRPNQNGRGL (68 aa)) are interaction with FBLN5. A lysyl-oxidase like region spans residues 387 to 591 (PDLVPDPNYV…STTNCKIVQS (205 aa)). Cystine bridges form between cysteine 412–cysteine 418, cysteine 465–cysteine 514, cysteine 498–cysteine 504, cysteine 525–cysteine 535, and cysteine 572–cysteine 586. 3 residues coordinate Cu cation: histidine 466, histidine 468, and histidine 470. The lysine tyrosylquinone (Lys-Tyr) cross-link spans 494–529 (KASFCLEDSTCDFGNLKRYACTSHTQGLSPGCYDTY). Tyrosine 529 carries the 2',4',5'-topaquinone modification.

This sequence belongs to the lysyl oxidase family. Interacts (via propeptide) with EFEMP2. Interacts with FBLN5. Requires Cu cation as cofactor. Lysine tyrosylquinone residue serves as cofactor. In terms of processing, the lysine tyrosylquinone cross-link (LTQ) is generated by condensation of the epsilon-amino group of a lysine with a topaquinone produced by oxidation of tyrosine. Proteolytic processing by a furin-like protease causes removal of N-terminal propeptide resulting in an enzyme largely inactive, but further proteolytic processing by BMP1 results in enzyme activation.

The protein resides in the secreted. It localises to the extracellular space. Its subcellular location is the extracellular matrix. The enzyme catalyses L-lysyl-[protein] + O2 + H2O = (S)-2-amino-6-oxohexanoyl-[protein] + H2O2 + NH4(+). Its function is as follows. Catalyzes the oxidative deamination of lysine and hydroxylysine residues in collagen and elastin, resulting in the formation of covalent cross-linkages, and the stabilization of collagen and elastin fibers. Essential for the elastic fiber homeostasis and for their maintenance at adult age. The polypeptide is Lysyl oxidase homolog 1 (LOXL1) (Bos taurus (Bovine)).